A 244-amino-acid chain; its full sequence is Leucyl/phenylalanyl-tRNA--protein transferase (244 aa).

A disordered region spans residues 1 to 22 (MHSQPYLLSPAPNNTPFPPAEH).

Belongs to the L/F-transferase family.

The protein localises to the cytoplasm. The catalysed reaction is N-terminal L-lysyl-[protein] + L-leucyl-tRNA(Leu) = N-terminal L-leucyl-L-lysyl-[protein] + tRNA(Leu) + H(+). It catalyses the reaction N-terminal L-arginyl-[protein] + L-leucyl-tRNA(Leu) = N-terminal L-leucyl-L-arginyl-[protein] + tRNA(Leu) + H(+). The enzyme catalyses L-phenylalanyl-tRNA(Phe) + an N-terminal L-alpha-aminoacyl-[protein] = an N-terminal L-phenylalanyl-L-alpha-aminoacyl-[protein] + tRNA(Phe). Functionally, functions in the N-end rule pathway of protein degradation where it conjugates Leu, Phe and, less efficiently, Met from aminoacyl-tRNAs to the N-termini of proteins containing an N-terminal arginine or lysine. This is Leucyl/phenylalanyl-tRNA--protein transferase from Xylella fastidiosa (strain M12).